The primary structure comprises 345 residues: Histone H3-like centromeric protein cpar-1 (345 aa).

The disordered stretch occupies residues 117–246 (NHSNRKPLEE…SRVTKTHNRK (130 aa)). Basic and acidic residues predominate over residues 122–149 (KPLEESRRREEPRDRVHESNIDITHRGD). The segment covering 233–246 (RSGKSRVTKTHNRK) has biased composition (basic residues). Residues 263–340 (STDMLIQKAP…TDIQLYRRLC (78 aa)) form an H3-like region.

Belongs to the histone H3 family. Forms a nucleosome-like histone octamer containing two molecules each of H2A, H2B, cpar-1 and H4 assembled in one cpar-1-H4 heterotetramer and two H2A-H2B heterodimers. Cleaved at the onset of meiotic anaphase I, likely by separase sep-1.

The protein resides in the nucleus. It localises to the chromosome. In terms of biological role, histone H3-like variant which exclusively replaces conventional H3 in the nucleosome core of centromeric chromatin at the inner plate of the kinetochore. Required for recruitment and assembly of kinetochore proteins, mitotic progression and chromosome segregation. May serve as an epigenetic mark that propagates centromere identity through replication and cell division. Not required for chromosome segregation during meiosis. The chain is Histone H3-like centromeric protein cpar-1 from Caenorhabditis briggsae.